A 346-amino-acid chain; its full sequence is tRNA/tmRNA (uracil-C(5))-methyltransferase (346 aa).

Residues Gln168, Tyr197, Asn202, Glu218, and Asp278 each contribute to the S-adenosyl-L-methionine site. Cys303 (nucleophile) is an active-site residue. Glu337 functions as the Proton acceptor in the catalytic mechanism.

Belongs to the class I-like SAM-binding methyltransferase superfamily. RNA M5U methyltransferase family. TrmA subfamily.

The enzyme catalyses uridine(54) in tRNA + S-adenosyl-L-methionine = 5-methyluridine(54) in tRNA + S-adenosyl-L-homocysteine + H(+). It carries out the reaction uridine(341) in tmRNA + S-adenosyl-L-methionine = 5-methyluridine(341) in tmRNA + S-adenosyl-L-homocysteine + H(+). Dual-specificity methyltransferase that catalyzes the formation of 5-methyluridine at position 54 (m5U54) in all tRNAs, and that of position 341 (m5U341) in tmRNA (transfer-mRNA). The protein is tRNA/tmRNA (uracil-C(5))-methyltransferase of Campylobacter lari (strain RM2100 / D67 / ATCC BAA-1060).